Here is a 276-residue protein sequence, read N- to C-terminus: uncharacterized protein (276 aa).

The propeptide at 1–4 (MNRG) is leader sequence. Met5 bears the N-methylmethionine mark. The chain crosses the membrane as a helical span at residues 5 to 26 (MTLIELLVALALSIILSLGLYY).

Its subcellular location is the membrane. This is an uncharacterized protein from Aquifex aeolicus (strain VF5).